Reading from the N-terminus, the 271-residue chain is Ribonuclease HII (271 aa).

The RNase H type-2 domain maps to 84–271 (VLIAGVDEVG…HRMSFLSNYI (188 aa)). A divalent metal cation-binding residues include aspartate 90, glutamate 91, and aspartate 187.

This sequence belongs to the RNase HII family. Requires Mn(2+) as cofactor. It depends on Mg(2+) as a cofactor.

The protein localises to the cytoplasm. The catalysed reaction is Endonucleolytic cleavage to 5'-phosphomonoester.. Its function is as follows. Endonuclease that specifically degrades the RNA of RNA-DNA hybrids. The sequence is that of Ribonuclease HII from Clostridium tetani (strain Massachusetts / E88).